Consider the following 235-residue polypeptide: Phosphoribosylaminoimidazole-succinocarboxamide synthase (235 aa).

This sequence belongs to the SAICAR synthetase family.

The catalysed reaction is 5-amino-1-(5-phospho-D-ribosyl)imidazole-4-carboxylate + L-aspartate + ATP = (2S)-2-[5-amino-1-(5-phospho-beta-D-ribosyl)imidazole-4-carboxamido]succinate + ADP + phosphate + 2 H(+). It functions in the pathway purine metabolism; IMP biosynthesis via de novo pathway; 5-amino-1-(5-phospho-D-ribosyl)imidazole-4-carboxamide from 5-amino-1-(5-phospho-D-ribosyl)imidazole-4-carboxylate: step 1/2. This Streptococcus pneumoniae (strain JJA) protein is Phosphoribosylaminoimidazole-succinocarboxamide synthase.